Here is a 176-residue protein sequence, read N- to C-terminus: MAEVHIIGQIIGASGFPQHSLFCKWGLHTGGAWKLLSGVVEGQTQVDHPQNDDMAFWSHPIDMHFATKGLQGWPKLHLQVWHQDTFGRNELYGYSFLHIPSTPGTHTLLSPTWRPLGTWQEQICQMFVGGGPQLKSASLIYGGSDRYRLQTVAMGQVHLELTVILRNFERYGVESS.

Residues 2–118 (AEVHIIGQII…LSPTWRPLGT (117 aa)) enclose the C2 B9-type domain.

Belongs to the B9D family. As to quaternary structure, part of the tectonic-like complex (also named B9 complex).

It is found in the cytoplasm. It localises to the cytoskeleton. The protein resides in the cilium basal body. Its subcellular location is the cilium axoneme. Component of the tectonic-like complex, a complex localized at the transition zone of primary cilia and acting as a barrier that prevents diffusion of transmembrane proteins between the cilia and plasma membranes. In Xenopus laevis (African clawed frog), this protein is B9 domain-containing protein 2 (b9d2).